The primary structure comprises 121 residues: Inner membrane protein YhaH (121 aa).

Over 1–23 the chain is Periplasmic; it reads MDWYLKVLKNYVGFRGRARRKEY. A helical membrane pass occupies residues 24 to 44; that stretch reads WMFILVNIIFTFVLGLLDKML. Residues 45–49 are Cytoplasmic-facing; the sequence is GWQRA. Residues 50-70 form a helical membrane-spanning segment; sequence GGEGILTTIYGILVFLPWWAV. Topologically, residues 71–80 are periplasmic; that stretch reads QFRRLHDTDR. The chain crosses the membrane as a helical span at residues 81 to 101; the sequence is SAWWALLFLIPFIGWLIIIVF. Over 102–121 the chain is Cytoplasmic; sequence NCQAGTPGENRFGPDPKLEP.

This sequence to E.coli YhaI.

Its subcellular location is the cell inner membrane. In Escherichia coli O157:H7, this protein is Inner membrane protein YhaH (yhaH).